The sequence spans 354 residues: Hyaluronan and proteoglycan link protein 1 (354 aa).

A propeptide spanning residues 1 to 9 (MKSLLLLVL) is cleaved from the precursor. Asn21 and Asn56 each carry an N-linked (GlcNAc...) asparagine glycan. Residues 38–152 (PRLLVEAEQA…EGLEDDTAVV (115 aa)) form the Ig-like V-type domain. 5 disulfide bridges follow: Cys61/Cys139, Cys181/Cys252, Cys205/Cys226, Cys279/Cys349, and Cys304/Cys325. Link domains lie at 159 to 254 (VVFP…FCFT) and 259 to 351 (GRFY…YCFR).

It belongs to the HAPLN family.

It localises to the secreted. The protein resides in the extracellular space. Its subcellular location is the extracellular matrix. Functionally, stabilizes the aggregates of proteoglycan monomers with hyaluronic acid in the extracellular cartilage matrix. The sequence is that of Hyaluronan and proteoglycan link protein 1 (HAPLN1) from Sus scrofa (Pig).